Reading from the N-terminus, the 210-residue chain is Redox-sensing transcriptional repressor Rex (210 aa).

The segment at residues Lys17–Phe56 is a DNA-binding region (H-T-H motif). Residue Gly91–Gly96 coordinates NAD(+).

This sequence belongs to the transcriptional regulatory Rex family. In terms of assembly, homodimer.

The protein localises to the cytoplasm. Its function is as follows. Modulates transcription in response to changes in cellular NADH/NAD(+) redox state. This Clostridium botulinum (strain Loch Maree / Type A3) protein is Redox-sensing transcriptional repressor Rex.